Here is a 971-residue protein sequence, read N- to C-terminus: Exportin-2 (971 aa).

The Importin N-terminal domain maps to 29–102 (AEKYLESVEG…KSSIINLMLR (74 aa)).

It belongs to the XPO2/CSE1 family.

It is found in the cytoplasm. The protein resides in the nucleus. Its function is as follows. Export receptor for importin alpha. Mediates importin-alpha re-export from the nucleus to the cytoplasm after import substrates have been released into the nucleoplasm. The polypeptide is Exportin-2 (cse1l) (Xenopus laevis (African clawed frog)).